Here is an 831-residue protein sequence, read N- to C-terminus: Leucine--tRNA ligase (831 aa).

The short motif at 35–45 is the 'HIGH' region element; it reads PYPSGKIHVGH. Positions 600–604 match the 'KMSKS' region motif; that stretch reads KMSKS. Lysine 603 is a binding site for ATP.

This sequence belongs to the class-I aminoacyl-tRNA synthetase family.

Its subcellular location is the cytoplasm. It carries out the reaction tRNA(Leu) + L-leucine + ATP = L-leucyl-tRNA(Leu) + AMP + diphosphate. In Rickettsia bellii (strain RML369-C), this protein is Leucine--tRNA ligase.